A 315-amino-acid polypeptide reads, in one-letter code: Methionyl-tRNA formyltransferase (315 aa).

Residue 112 to 115 (SLLP) participates in (6S)-5,6,7,8-tetrahydrofolate binding.

This sequence belongs to the Fmt family.

The enzyme catalyses L-methionyl-tRNA(fMet) + (6R)-10-formyltetrahydrofolate = N-formyl-L-methionyl-tRNA(fMet) + (6S)-5,6,7,8-tetrahydrofolate + H(+). Functionally, attaches a formyl group to the free amino group of methionyl-tRNA(fMet). The formyl group appears to play a dual role in the initiator identity of N-formylmethionyl-tRNA by promoting its recognition by IF2 and preventing the misappropriation of this tRNA by the elongation apparatus. The polypeptide is Methionyl-tRNA formyltransferase (Rhizobium rhizogenes (strain K84 / ATCC BAA-868) (Agrobacterium radiobacter)).